We begin with the raw amino-acid sequence, 642 residues long: Polyglycine hydrolase (642 aa).

An N-terminal signal peptide occupies residues methionine 1–serine 23. Asparagine 37, asparagine 100, asparagine 159, and asparagine 341 each carry an N-linked (GlcNAc...) asparagine glycan. Cysteine 149 and cysteine 183 form a disulfide bridge. The active site involves serine 370. 5 N-linked (GlcNAc...) asparagine glycosylation sites follow: asparagine 390, asparagine 407, asparagine 444, asparagine 487, and asparagine 494.

Belongs to the peptidase S12 family.

Its subcellular location is the secreted. It carries out the reaction a glycyl-glycyl-[protein] + H2O = N-terminal glycyl-[protein] + [protein]-C-terminal glycine. Its activity is regulated as follows. Not inhibited by phenylmethylsulfonyl fluoride (PMSF; serine peptidase class S1 inhibitor), clavulanic acid (beta-lactamase inhibitor) or ampicillin (penicillin-binding protein (PBP) inhibitor). Its function is as follows. Serine-type endopeptidase that cleaves Gly-Gly bonds in the polyglycine linker of host plant class IV chitinases to disrupt their chitin-binding, and thereby plays a role in lowering the defense responses of the host to the fungus. Degrades Z.mays Endochitinase A (CHIA). Degrades Z.mays Endochitinase B (CHIB). Has no activity on Z.mays CHIA following CHIA cleavage by fungalysin. The chain is Polyglycine hydrolase from Epicoccum sorghinum (Endophyte fungus).